The following is a 714-amino-acid chain: MELGKAKLLRTGLNTLHQAIHPVHGIAWTDGKQVCLTSLFSVEGEPKFGDTNVIGQFEHVLGLFWGPLCCSGSPALLAVQHKKHVTVWQLQLSALEQNKLLCTQTCEMSEPFPLLSQGCVWHPKMDVLAILTKRDASVLFSVRVDNRRVKADIKGSGLIHCACWTKDGTRLVVAIGSALHSYTWNDIQKSLVPCSFCPIFDVGGYICAIESTDEAQVAVATELPLDKICGLNAGMAFDLPNESEGLCRPSAALTVDTDYYLDRRRSCDSERSGHASSGPIDLTNLLAKHRKSDPSPLIHLRKRDNLTGTGQDSSHLILVTYERKVTTTRKVSIPGILVPDIIAFDPNGHTVAVASNTCNMILVYCITDSSMPNVQQIQLQKNERPKGVCFFTNKMLLFMIGRQKSNDPAFLPSSNTDKYILRLTAKELVFDEESTTKSESPSQHHGIRRHSENFTKEDRLSIKDLILPGGSVIVSPSSRRKLIEEVRSSDLSPVASSADFSDRASSASSVTLENYDMDHITRMASLAVAGQASRDSSRPCSPRYETSEKLYSDATPPKNSKEKNLEQLTQNMERIFTRFAEVQQCLSEIREFTQNGKKIACSYPSAYEPQYVHITCQKQLSENVYTDERRPLLLCGGRICLRVVQELFGLTVVEMMHGPMWITLVADADGFVPLTFKHKDELTIRSARRKSPARPPSGADDFPPESPKSPSMEK.

WD repeat units follow at residues 55 to 98 (GQFE…LEQN) and 154 to 194 (KGSG…LVPC). 2 disordered regions span residues 432–454 (EEST…SENF) and 531–564 (QASR…KEKN). Residues 567 to 595 (QLTQNMERIFTRFAEVQQCLSEIREFTQN) adopt a coiled-coil conformation. Residues 685 to 714 (RSARRKSPARPPSGADDFPPESPKSPSMEK) are disordered.

In Danio rerio (Zebrafish), this protein is WD repeat and coiled-coil-containing protein (wdcp).